The following is a 463-amino-acid chain: L-seryl-tRNA(Sec) selenium transferase (463 aa).

The residue at position 295 (K295) is an N6-(pyridoxal phosphate)lysine.

This sequence belongs to the SelA family. As to quaternary structure, homodecamer; pentamer of dimers. Binds only one seryl-tRNA(Sec) per dimer. Requires pyridoxal 5'-phosphate as cofactor.

The protein localises to the cytoplasm. It carries out the reaction L-seryl-tRNA(Sec) + selenophosphate + H(+) = L-selenocysteinyl-tRNA(Sec) + phosphate. The protein operates within aminoacyl-tRNA biosynthesis; selenocysteinyl-tRNA(Sec) biosynthesis; selenocysteinyl-tRNA(Sec) from L-seryl-tRNA(Sec) (bacterial route): step 1/1. Its function is as follows. Converts seryl-tRNA(Sec) to selenocysteinyl-tRNA(Sec) required for selenoprotein biosynthesis. This is L-seryl-tRNA(Sec) selenium transferase from Escherichia coli O7:K1 (strain IAI39 / ExPEC).